Here is a 65-residue protein sequence, read N- to C-terminus: Large ribosomal subunit protein bL35 (65 aa).

A disordered region spans residues 1–28; it reads MPKLKTRKAAARRFKATGSGKIKRRKAF.

It belongs to the bacterial ribosomal protein bL35 family.

This chain is Large ribosomal subunit protein bL35, found in Trichodesmium erythraeum (strain IMS101).